The chain runs to 287 residues: MDEVVKGLIKNEHVLVVATICTETVEYARKIHDTWPTATAAMGRVIAGSVLLASTLKDRQKIMVQIKGDGPLNEVVAEADSFYRVRAYVKRPHIYMGLKNEKIDVGRGVGKGFLNVIRDLGLREYYQSSVELQTGEIARDLAYYLNVSEQIPSAVSLGVYVEPDNSVKAAGGFMIQTMPETRTEIVEFLERKLSETQSTSSMILQGMDSLQILEEVVGLPIEVLHRGTVTYFCPCTKDRVINAIVTLGREEIQKMIEEGKTVDVECYFCKKKYEVTVEELKILLREI.

2 disulfide bridges follow: Cys233/Cys235 and Cys266/Cys269.

This sequence belongs to the HSP33 family. In terms of processing, under oxidizing conditions two disulfide bonds are formed involving the reactive cysteines. Under reducing conditions zinc is bound to the reactive cysteines and the protein is inactive.

Its subcellular location is the cytoplasm. Functionally, redox regulated molecular chaperone. Protects both thermally unfolding and oxidatively damaged proteins from irreversible aggregation. Plays an important role in the bacterial defense system toward oxidative stress. The sequence is that of 33 kDa chaperonin from Thermodesulfovibrio yellowstonii (strain ATCC 51303 / DSM 11347 / YP87).